The chain runs to 461 residues: CBL-interacting protein kinase 5 (461 aa).

One can recognise a Protein kinase domain in the interval 12–266 (YELGRMLGQG…VEKLVEHPWF (255 aa)). ATP contacts are provided by residues 18 to 26 (LGQGTFAKV) and Lys-41. The active-site Proton acceptor is the Asp-134. The interval 152–181 (DFGLSAFKECQKQDGLLHTTCGTPAYVAPE) is activation loop. The 35-residue stretch at 300-334 (EGKAKEPASSLKPVSLNAFDIISLSKGFDLSGLFE) folds into the NAF domain. A PPI region spans residues 340 to 369 (KADSRFMTQKPASAIVSKLEQIAETESFKV). A disordered region spans residues 440–461 (HPSLAQSSTLTQSSKSISRHAI). Low complexity predominate over residues 442–455 (SLAQSSTLTQSSKS).

It belongs to the protein kinase superfamily. CAMK Ser/Thr protein kinase family. SNF1 subfamily. It depends on Mn(2+) as a cofactor.

The enzyme catalyses L-seryl-[protein] + ATP = O-phospho-L-seryl-[protein] + ADP + H(+). It carries out the reaction L-threonyl-[protein] + ATP = O-phospho-L-threonyl-[protein] + ADP + H(+). CIPK serine-threonine protein kinases interact with CBL proteins. Binding of a CBL protein to the regulatory NAF domain of CIPK protein lead to the activation of the kinase in a calcium-dependent manner. The polypeptide is CBL-interacting protein kinase 5 (CIPK5) (Oryza sativa subsp. japonica (Rice)).